The chain runs to 174 residues: Interferon gamma (174 aa).

Residues M1–C23 form the signal peptide. Position 24 is a pyrrolidone carboxylic acid (Q24). 2 N-linked (GlcNAc...) asparagine glycosylation sites follow: N39 and N106.

This sequence belongs to the type II (or gamma) interferon family. Homodimer. Interacts with IFNGR1 (via extracellular domain); this interaction promotes IFNGR1 dimerization. Released primarily from activated T lymphocytes.

It is found in the secreted. In terms of biological role, type II interferon produced by immune cells such as T-cells and NK cells that plays crucial roles in antimicrobial, antiviral, and antitumor responses by activating effector immune cells and enhancing antigen presentation. Primarily signals through the JAK-STAT pathway after interaction with its receptor IFNGR1 to affect gene regulation. Upon IFNG binding, IFNGR1 intracellular domain opens out to allow association of downstream signaling components JAK2, JAK1 and STAT1, leading to STAT1 activation, nuclear translocation and transcription of IFNG-regulated genes. Many of the induced genes are transcription factors such as IRF1 that are able to further drive regulation of a next wave of transcription. Plays a role in class I antigen presentation pathway by inducing a replacement of catalytic proteasome subunits with immunoproteasome subunits. In turn, increases the quantity, quality, and repertoire of peptides for class I MHC loading. Increases the efficiency of peptide generation also by inducing the expression of activator PA28 that associates with the proteasome and alters its proteolytic cleavage preference. Up-regulates as well MHC II complexes on the cell surface by promoting expression of several key molecules such as cathepsins B/CTSB, H/CTSH, and L/CTSL. Participates in the regulation of hematopoietic stem cells during development and under homeostatic conditions by affecting their development, quiescence, and differentiation. The sequence is that of Interferon gamma (IFNG) from Mesocricetus auratus (Golden hamster).